Here is a 662-residue protein sequence, read N- to C-terminus: DNA ligase (662 aa).

Residues 31-35 (DYEYD), 80-81 (SL), and Glu109 contribute to the NAD(+) site. Lys111 functions as the N6-AMP-lysine intermediate in the catalytic mechanism. Residues Arg132, Glu166, Lys282, and Lys306 each contribute to the NAD(+) site. Cys400, Cys403, Cys418, and Cys423 together coordinate Zn(2+). Positions 581–662 (KVNNIFEGKT…FEEMLKGENI (82 aa)) constitute a BRCT domain.

This sequence belongs to the NAD-dependent DNA ligase family. LigA subfamily. Mg(2+) is required as a cofactor. Mn(2+) serves as cofactor.

The catalysed reaction is NAD(+) + (deoxyribonucleotide)n-3'-hydroxyl + 5'-phospho-(deoxyribonucleotide)m = (deoxyribonucleotide)n+m + AMP + beta-nicotinamide D-nucleotide.. Functionally, DNA ligase that catalyzes the formation of phosphodiester linkages between 5'-phosphoryl and 3'-hydroxyl groups in double-stranded DNA using NAD as a coenzyme and as the energy source for the reaction. It is essential for DNA replication and repair of damaged DNA. This Thermoanaerobacter pseudethanolicus (strain ATCC 33223 / 39E) (Clostridium thermohydrosulfuricum) protein is DNA ligase.